Here is a 195-residue protein sequence, read N- to C-terminus: Imidazoleglycerol-phosphate dehydratase (195 aa).

Belongs to the imidazoleglycerol-phosphate dehydratase family.

Its subcellular location is the cytoplasm. The catalysed reaction is D-erythro-1-(imidazol-4-yl)glycerol 3-phosphate = 3-(imidazol-4-yl)-2-oxopropyl phosphate + H2O. It participates in amino-acid biosynthesis; L-histidine biosynthesis; L-histidine from 5-phospho-alpha-D-ribose 1-diphosphate: step 6/9. In Alkaliphilus metalliredigens (strain QYMF), this protein is Imidazoleglycerol-phosphate dehydratase.